The following is a 464-amino-acid chain: Flavin-containing monooxygenase FMO GS-OX-like 7 (464 aa).

Position 18–23 (18–23) interacts with FAD; that stretch reads GAGAAG. Residue 214 to 219 participates in NADP(+) binding; that stretch reads GSSVSG.

It belongs to the FMO family. FAD serves as cofactor.

Catalyzes the conversion of methylthioalkyl glucosinolates of any chain length into methylsulfinylalkyl glucosinolates. The protein is Flavin-containing monooxygenase FMO GS-OX-like 7 of Arabidopsis thaliana (Mouse-ear cress).